Reading from the N-terminus, the 237-residue chain is Uridylate kinase (237 aa).

Residue 9–12 (KLSG) participates in ATP binding. The segment at 17-22 (GSQGYG) is involved in allosteric activation by GTP. Position 51 (Gly-51) interacts with UMP. 2 residues coordinate ATP: Gly-52 and Arg-56. UMP-binding positions include Asp-71 and 132 to 139 (CGNPFFTT). ATP contacts are provided by Thr-159, Tyr-165, and Asp-168.

Belongs to the UMP kinase family. In terms of assembly, homohexamer.

The protein localises to the cytoplasm. The catalysed reaction is UMP + ATP = UDP + ADP. It functions in the pathway pyrimidine metabolism; CTP biosynthesis via de novo pathway; UDP from UMP (UMPK route): step 1/1. Allosterically activated by GTP. Inhibited by UTP. Its function is as follows. Catalyzes the reversible phosphorylation of UMP to UDP. In Synechococcus sp. (strain CC9902), this protein is Uridylate kinase.